A 379-amino-acid polypeptide reads, in one-letter code: Dihydroflavonol 4-reductase (379 aa).

NADP(+) is bound by residues Lys56 and Tyr175.

This sequence belongs to the NAD(P)-dependent epimerase/dehydratase family. Dihydroflavonol-4-reductase subfamily. As to expression, expressed in both leaf and hypocotyl tissues.

The catalysed reaction is a (2R,3S,4S)-leucoanthocyanidin + NADP(+) = a (2R,3R)-dihydroflavonol + NADPH + H(+). It catalyses the reaction (2S)-flavan-4-ol + NADP(+) = (2S)-flavanone + NADPH + H(+). It functions in the pathway pigment biosynthesis; anthocyanin biosynthesis. Bifunctional enzyme involved in flavonoid metabolism. The protein is Dihydroflavonol 4-reductase of Solanum lycopersicum (Tomato).